An 88-amino-acid polypeptide reads, in one-letter code: Small ribosomal subunit protein bS20 (88 aa).

Residues 1 to 27 (MANSKSAKKRALQSEKRRQHNASRRSM) are disordered.

This sequence belongs to the bacterial ribosomal protein bS20 family.

In terms of biological role, binds directly to 16S ribosomal RNA. The sequence is that of Small ribosomal subunit protein bS20 from Shewanella frigidimarina (strain NCIMB 400).